Consider the following 634-residue polypeptide: tRNA uridine 5-carboxymethylaminomethyl modification enzyme MnmG (634 aa).

Residue 14–19 participates in FAD binding; sequence GGGHAG. Residue 279-293 coordinates NAD(+); sequence GPRYCPSIEDKVVRF.

The protein belongs to the MnmG family. In terms of assembly, homodimer. Heterotetramer of two MnmE and two MnmG subunits. It depends on FAD as a cofactor.

The protein localises to the cytoplasm. NAD-binding protein involved in the addition of a carboxymethylaminomethyl (cmnm) group at the wobble position (U34) of certain tRNAs, forming tRNA-cmnm(5)s(2)U34. This is tRNA uridine 5-carboxymethylaminomethyl modification enzyme MnmG from Xanthomonas axonopodis pv. citri (strain 306).